Consider the following 790-residue polypeptide: E3 ubiquitin-protein ligase Jade-2 (790 aa).

2 disordered regions span residues 1–52 and 111–130; these read MEEK…PSEV and GPPAQASPSSTMLGEGSQPD. A phosphoserine mark is found at Ser-9 and Ser-15. Residues 9-28 show a composition bias toward low complexity; that stretch reads SISSDNSDTTDSHATSTSAS. Residues Lys-32 and Lys-38 each carry the N6-acetyllysine modification. Ser-117 carries the post-translational modification Phosphoserine. A PHD-type 1 zinc finger spans residues 199-249; that stretch reads DVVCDVCRSPEGEDGNEMVFCDKCNVCVHQACYGILKVPTGSWLCRTCALG. Residues 251–285 form a C2HC pre-PHD-type zinc finger; it reads QPKCLLCPKRGGALKPTRSGTKWVHVSCALWIPEV. Lys-298 is subject to N6-acetyllysine. Residues 309–365 form a PHD-type 2 zinc finger; sequence LSCSLCKECTGTCIQCSMPSCVTAFHVTCAFDHGLEMRTILADNDEVKFKSFCQEHS. Disordered regions lie at residues 361–386 and 578–777; these read CQEHSDGGPRNEPTSEPTEPSQAGED and SFMR…PREA. Residues 372–381 are compositionally biased toward polar residues; it reads EPTSEPTEPS. Over residues 593 to 606 the composition is skewed to basic residues; it reads KARGRTRLPAKKKP. Over residues 684–693 the composition is skewed to low complexity; the sequence is AASVAADSDV. The span at 737-747 shows a compositional bias: basic and acidic residues; that stretch reads ERPKVSLHFDT. Acidic residues predominate over residues 757–767; the sequence is EMSDSDVEAED.

This sequence belongs to the JADE family. Component of the HBO1 complex composed at least of ING4 or ING5, MYST2/HBO1, MEAF6, and one of JADE1, JADE2 and JADE3. Interacts (via C-terminus) with KDM1A (via AOD/Tower domain).

It carries out the reaction S-ubiquitinyl-[E2 ubiquitin-conjugating enzyme]-L-cysteine + [acceptor protein]-L-lysine = [E2 ubiquitin-conjugating enzyme]-L-cysteine + N(6)-ubiquitinyl-[acceptor protein]-L-lysine.. It functions in the pathway protein modification; protein ubiquitination. Its function is as follows. Scaffold subunit of some HBO1 complexes, which have a histone H4 acetyltransferase activity. Acts as an E3 ubiquitin-protein ligase mediating the ubiquitination and subsequent proteasomal degradation of target protein histone demethylase KDM1A. Also acts as a ubiquitin ligase E3 toward itself. Positive regulator of neurogenesis. The polypeptide is E3 ubiquitin-protein ligase Jade-2 (JADE2) (Homo sapiens (Human)).